Reading from the N-terminus, the 240-residue chain is CRISPR system aCascade subunit Cas5 1 (240 aa).

It belongs to the CRISPR-associated protein Cas5 family. Subtype I-A/Apern subfamily. As to quaternary structure, part of the aCascade ribonucleoprotein complex, minimally composed of Csa2 and Cas5a, which binds crRNA. Other possible components of aCascade in strain P1 are Cas6b (SSO1437) and Csa5 (SSO1443), while SSO1399, Cas5b (SSO1400) and SSO1401 have sometimes been seen weakly associated. Csa2 is probably the major RNA-binding subunit. The Csa2-Cas5a-crRNA complex also binds target DNA homologous to crRNA, probably forming an R-loop. Purified aCascade forms a filament about 6 nm in width.

Its function is as follows. CRISPR (clustered regularly interspaced short palindromic repeat) is an adaptive immune system that provides protection against mobile genetic elements (viruses, transposable elements and conjugative plasmids). CRISPR clusters contain spacers, sequences complementary to antecedent mobile elements, and target invading nucleic acids. CRISPR clusters are transcribed and processed into CRISPR RNA (crRNA). The chain is CRISPR system aCascade subunit Cas5 1 (cas5a) from Saccharolobus solfataricus (strain ATCC 35092 / DSM 1617 / JCM 11322 / P2) (Sulfolobus solfataricus).